The sequence spans 90 residues: RNA-binding protein Hfq (90 aa).

Residues 9-68 (EPFLNTLRKEKVPVSIYLVNGIKLQGQIESFDQFVVLLRNNVNQMVYKHAISTIVPARRV) form the Sm domain.

The protein belongs to the Hfq family. Homohexamer.

Its function is as follows. RNA chaperone that binds small regulatory RNA (sRNAs) and mRNAs to facilitate mRNA translational regulation in response to envelope stress, environmental stress and changes in metabolite concentrations. Also binds with high specificity to tRNAs. In Halorhodospira halophila (strain DSM 244 / SL1) (Ectothiorhodospira halophila (strain DSM 244 / SL1)), this protein is RNA-binding protein Hfq.